Here is a 930-residue protein sequence, read N- to C-terminus: Urea transporter 2 (930 aa).

The span at 1 to 11 (MSDHHPLKEMS) shows a compositional bias: basic and acidic residues. Residues 1–90 (MSDHHPLKEM…KRRESEVSRR (90 aa)) form a disordered region. Composition is skewed to low complexity over residues 12–25 (DSNS…PLSS) and 32–43 (SELSSPTWPSSS). Basic and acidic residues predominate over residues 56–89 (PEEKDLRSSDEDSHIVKIEKPNERNKRRESEVSR). A run of 8 helical transmembrane segments spans residues 145–165 (ISGL…TIAG), 185–205 (AIAS…MAVF), 213–233 (WWLL…SSAL), 242–262 (LPVF…ATGH), 280–300 (NITW…VGVG), 311–331 (GGVI…HAAI), 350–372 (IYLG…MFYA), and 401–421 (VVGV…FLLL). The interval 452-479 (SEEEKSPNGGSGEQSHGSGQWKAEESSE) is disordered. Serine 487 is modified (phosphoserine). The next 4 membrane-spanning stretches (helical) occupy residues 610–630 (GILI…SGCL), 648–668 (AIAA…MAVF), 676–696 (WWLL…SSAL), and 705–725 (LPVF…ATGH). Asparagine 743 is a glycosylation site (N-linked (GlcNAc...) asparagine). The next 4 helical transmembrane spans lie at 774–794 (GGIF…HAAI), 813–833 (IYFG…GGMF), 842–862 (LLAI…ANML), and 864–884 (VFGL…FLLL).

This sequence belongs to the urea transporter family. Highly expressed in kidney medulla (at protein level). Also detected in testes, heart, brain and liver (at protein level). In the kidney, present in thin descending limbs of the loop of Henle and in the middle and terminal inner medullary collecting ducts. In terms of tissue distribution, expressed in the kidney medulla. As to expression, expressed in the peritubular myoid cells forming the outermost layer of the seminiferous tubules within the testes and is not detected in kidney. Expression levels are coordinated with the stage of testes development and increase 15 days postpartum, commensurate with the start of seminiferous tubule fluid movement.

It localises to the apical cell membrane. The protein resides in the basolateral cell membrane. The enzyme catalyses urea(in) = urea(out). With respect to regulation, inhibited by phloretin. Activated by forskolin, 3-isobutyl-1-methylxanthine (IBMX) and cAMP. Inhibited by phloretin. Its activity is regulated as follows. Inhibited by phloretin. Activated by forskolin, 3-isobutyl-1-methylxanthine (IBMX) and cAMP. Its function is as follows. Mediates the transport of urea driven by a concentration gradient across the cell membrane of the renal inner medullary collecting duct which is critical to the urinary concentrating mechanism. In terms of biological role, mediates the transport of urea driven by a concentration gradient across the cell membrane. Implicated in the urea movement across the blood-testis barrier and does not translocate water. The chain is Urea transporter 2 (Slc14a2) from Mus musculus (Mouse).